Here is a 61-residue protein sequence, read N- to C-terminus: UPF0434 protein PFL_1779 (61 aa).

This sequence belongs to the UPF0434 family.

This chain is UPF0434 protein PFL_1779, found in Pseudomonas fluorescens (strain ATCC BAA-477 / NRRL B-23932 / Pf-5).